A 1208-amino-acid chain; its full sequence is Calmodulin-binding transcription activator 2 (1208 aa).

Residues 30 to 160 constitute a DNA-binding region (CG-1); the sequence is RCPLLPPERL…YLNVPALEDC (131 aa). A Nuclear localization signal motif is present at residues 78–86; that stretch reads NRKKVKYRK. 3 disordered regions span residues 269–328, 366–418, and 437–507; these read ISHS…SRGG, VGSE…PCPA, and QLGA…ELEP. A compositionally biased stretch (pro residues) spans 275–288; the sequence is PEPPPLIAPLPPEL. Low complexity-rich tracts occupy residues 294-305 and 319-328; these read SPSSSSSSSSSS and TSRGGSSRGG. Composition is skewed to pro residues over residues 371–380 and 464–476; these read SAPPAPPSPA and TVPP…PSSP. In terms of domain architecture, IPT/TIG spans 544–622; sequence DFSPEWSYPE…LSASVLFEYR (79 aa). 3 ANK repeats span residues 717 to 750, 762 to 792, and 796 to 826; these read RGMS…SLDL, FSCT…ALSI, and LGRL…ELSV. 2 disordered regions span residues 826–881 and 908–936; these read VEHP…ASDI and NSKE…DSPP. Residues 829–853 are compositionally biased toward low complexity; that stretch reads PLALSPPSSSPDTGLSSASSPSELS. IQ domains follow at residues 1054–1083 and 1107–1136; these read LYEA…AAAV and MTQA…AAVL. The segment at 1144-1166 is disordered; it reads YRRRPGPPHRPSGPLPARNKGTF.

This sequence belongs to the CAMTA family. May interact with calmodulin.

It localises to the nucleus. Its function is as follows. Transcription activator. May act as tumor suppressor. This Mus musculus (Mouse) protein is Calmodulin-binding transcription activator 2 (Camta2).